Reading from the N-terminus, the 88-residue chain is Sec-independent protein translocase protein TatA (88 aa).

Residues 3–23 form a helical membrane-spanning segment; sequence IFGVGLPEVTVILILALLIFG. Residues 56 to 88 form a disordered region; that stretch reads MNEQDKDESPISIESNQTNEINQEKIDSENSKK. Residues 67–76 show a composition bias toward polar residues; the sequence is SIESNQTNEI. The span at 77-88 shows a compositional bias: basic and acidic residues; that stretch reads NQEKIDSENSKK.

The protein belongs to the TatA/E family. In terms of assembly, forms a complex with TatC.

The protein resides in the cell inner membrane. Functionally, part of the twin-arginine translocation (Tat) system that transports large folded proteins containing a characteristic twin-arginine motif in their signal peptide across membranes. TatA could form the protein-conducting channel of the Tat system. The protein is Sec-independent protein translocase protein TatA of Prochlorococcus marinus (strain AS9601).